We begin with the raw amino-acid sequence, 467 residues long: Coiled-coil domain-containing protein 71 (467 aa).

The interval P81–T105 is disordered. Over residues A88–T105 the composition is skewed to low complexity. S129 is modified (phosphoserine). Disordered regions lie at residues K211 to T280 and V349 to L416. Positions G253–P265 are enriched in polar residues. Residues K279 to Q359 adopt a coiled-coil conformation. Residues V349–K380 show a composition bias toward basic residues. The span at R392–P401 shows a compositional bias: basic and acidic residues.

The sequence is that of Coiled-coil domain-containing protein 71 (CCDC71) from Homo sapiens (Human).